A 139-amino-acid polypeptide reads, in one-letter code: Translation initiation factor 2 subunit beta (139 aa).

Belongs to the eIF-2-beta/eIF-5 family. As to quaternary structure, heterotrimer composed of an alpha, a beta and a gamma chain.

EIF-2 functions in the early steps of protein synthesis by forming a ternary complex with GTP and initiator tRNA. In Saccharolobus solfataricus (strain ATCC 35092 / DSM 1617 / JCM 11322 / P2) (Sulfolobus solfataricus), this protein is Translation initiation factor 2 subunit beta.